A 239-amino-acid polypeptide reads, in one-letter code: MNSTAAAINPNPNVIPFDDTYILYDSHDFLSFLSAYFSLMPILVLAFYLSWFIITRELEACIVAFGQLMNEIFNNVIKNIIKQPRPVSFGASFQNDTIRSGYGMPSAHSQFMGFCFTYNSLKIYTSWKNLNFLEKCIFSGALALLSFCVCFSRVYLHYHNLDQVIVGFSVGALTGSLYFFIVGIIRELGLINWFLKLRIVRLFYMTDSYNLAPLTLKENYEAYWKRINQRSFNDKSKRD.

Over 1–34 the chain is Lumenal; the sequence is MNSTAAAINPNPNVIPFDDTYILYDSHDFLSFLS. The helical transmembrane segment at 35 to 55 threads the bilayer; that stretch reads AYFSLMPILVLAFYLSWFIIT. Over 56-131 the chain is Cytoplasmic; the sequence is RELEACIVAF…KIYTSWKNLN (76 aa). The helical transmembrane segment at 132–152 threads the bilayer; the sequence is FLEKCIFSGALALLSFCVCFS. Over 153–164 the chain is Lumenal; that stretch reads RVYLHYHNLDQV. Residues 165–185 traverse the membrane as a helical segment; the sequence is IVGFSVGALTGSLYFFIVGII. Topologically, residues 186 to 239 are cytoplasmic; sequence RELGLINWFLKLRIVRLFYMTDSYNLAPLTLKENYEAYWKRINQRSFNDKSKRD.

The protein belongs to the dolichyldiphosphatase family.

Its subcellular location is the endoplasmic reticulum membrane. The catalysed reaction is a di-trans,poly-cis-dolichyl diphosphate + H2O = a di-trans,poly-cis-dolichyl phosphate + phosphate + H(+). The protein operates within protein modification; protein glycosylation. In terms of biological role, non-essential protein which is required for efficient N-glycosylation. Necessary for maintaining optimal levels of dolichol-linked oligosaccharides. Hydrolyzes dolichyl pyrophosphate at a very high rate and dolichyl monophosphate at a much lower rate. Does not act on phosphatidate. This chain is Dolichyldiphosphatase (CAX4), found in Saccharomyces cerevisiae (strain ATCC 204508 / S288c) (Baker's yeast).